Reading from the N-terminus, the 159-residue chain is Transcription elongation factor A protein-like 1 (159 aa).

The segment at 1–99 (MDKPRKENEE…CGVGKHKLEE (99 aa)) is disordered. Residues 17–34 (KTDEERPPVEHSPEKQSL) are compositionally biased toward basic and acidic residues. Positions 37–54 (QSSEEQSSEEEFFPEELL) are enriched in acidic residues. Over residues 64-80 (SEERPPQEGLSRKDLFE) the composition is skewed to basic and acidic residues.

This sequence belongs to the TFS-II family. TFA subfamily.

The protein resides in the nucleus. Its function is as follows. May be involved in transcriptional regulation. Modulates various viral and cellular promoters in a promoter context-dependent manner. Does not bind DNA directly. The chain is Transcription elongation factor A protein-like 1 from Ateles geoffroyi (Black-handed spider monkey).